The sequence spans 731 residues: Inducible ornithine decarboxylase (731 aa).

N6-(pyridoxal phosphate)lysine is present on Lys-356.

This sequence belongs to the Orn/Lys/Arg decarboxylase class-I family. Dodecamer. It depends on pyridoxal 5'-phosphate as a cofactor.

The catalysed reaction is L-ornithine + H(+) = putrescine + CO2. This chain is Inducible ornithine decarboxylase (odcI), found in Lactobacillus sp. (strain 30a).